We begin with the raw amino-acid sequence, 722 residues long: MLDLTPQSKKISIQIGGMTCQSCANRIEKVLNKKPFVQQAGVNFAAEEAQVVFDATQASEAQIIEIIHKTGFSAHIKQANELPIEENTSIPWRLIVLWIINIPFLIGMLGMIGGSHNLMLPPIWQFALASIVQLWLAIPFYRGAIGSIRGGLTNMDVLVSTGTLTIYLYSAFMLFYHANHAMGHVYFEASVMVIGFVSLGKFLEDRTKKHSLNSLSMLLQLTPKKVTVLRNEKWIEIALDQVNIGEIIRANQGERIAADGVIESGNGWCDESHLTGESRPEEKQKGGKVLAGAMVTEGSIIYRANQLGSQTLLGDMMNALSDAQGSKAPIARFADKVTSVFVPVVLVISLVTFALTYILTNDSVSSLIHAVSVLVIACPCALGLATPAAIMVGLGKAVNAGVWFKDAAAMEETAHVDTVVLDKTGTLTKGELEISALWQPQSAVYSEDDLYRFAAAVERQANHPIAKAIVQAAEXKMLEIPTALFSKMEVGQGIQAELEQVGTIKVGKPDYCGLILPKNLEDIWQIASIVAVSINDEPIGAFALTDTLKNDSLHAIQRLQQQNIDVVIMSGDQQSVVDYIAKQLGIKKAFGKLTPRDKAEQIQKLKDLGHIVAMVGDGINDAPALASANVSFAMKSSSDIAEQTASATLMQHSVNQLVDALFIARATLKNIKQNLFFALIYNILGIPLAAFGFLSPIIAGAAMALSSISVLMNALRLKKVRF.

The 67-residue stretch at 9–75 (KKISIQIGGM…IIHKTGFSAH (67 aa)) folds into the HMA domain. Residues C20 and C23 each contribute to the a metal cation site. 6 helical membrane-spanning segments follow: residues 94-114 (LIVL…MIGG), 118-138 (LMLP…WLAI), 157-177 (VLVS…LFYH), 180-200 (HAMG…VSLG), 340-360 (VFVP…YILT), and 373-393 (VLVI…IMVG). D422 serves as the catalytic 4-aspartylphosphate intermediate. A run of 4 helical transmembrane segments spans residues 523–543 (IWQI…GAFA), 608–628 (LGHI…LASA), 675–695 (LFFA…GFLS), and 697–717 (IIAG…ALRL). Mg(2+)-binding residues include D617 and D621.

This sequence belongs to the cation transport ATPase (P-type) (TC 3.A.3) family. Type IB subfamily.

Its subcellular location is the cell membrane. It catalyses the reaction ATP + H2O = ADP + phosphate + H(+). The sequence is that of Probable cation-transporting ATPase HI_0290 from Haemophilus influenzae (strain ATCC 51907 / DSM 11121 / KW20 / Rd).